The chain runs to 209 residues: Ribosome maturation factor RimM (209 aa).

The region spanning 103–178 is the PRC barrel domain; that stretch reads EGATYVSDLV…RIEMVLPQGM (76 aa). Positions 184–209 are disordered; the sequence is PLSKAEKERQKSEADETREAGERRKR. The segment covering 187-209 has biased composition (basic and acidic residues); it reads KAEKERQKSEADETREAGERRKR.

It belongs to the RimM family. In terms of assembly, binds ribosomal protein uS19.

Its subcellular location is the cytoplasm. Its function is as follows. An accessory protein needed during the final step in the assembly of 30S ribosomal subunit, possibly for assembly of the head region. Essential for efficient processing of 16S rRNA. May be needed both before and after RbfA during the maturation of 16S rRNA. It has affinity for free ribosomal 30S subunits but not for 70S ribosomes. The chain is Ribosome maturation factor RimM from Koribacter versatilis (strain Ellin345).